Here is a 273-residue protein sequence, read N- to C-terminus: Putative pyruvate, phosphate dikinase regulatory protein (273 aa).

ADP is bound at residue 149–156 (GPSRTSKT).

It belongs to the pyruvate, phosphate/water dikinase regulatory protein family. PDRP subfamily.

The enzyme catalyses N(tele)-phospho-L-histidyl/L-threonyl-[pyruvate, phosphate dikinase] + ADP = N(tele)-phospho-L-histidyl/O-phospho-L-threonyl-[pyruvate, phosphate dikinase] + AMP + H(+). It carries out the reaction N(tele)-phospho-L-histidyl/O-phospho-L-threonyl-[pyruvate, phosphate dikinase] + phosphate + H(+) = N(tele)-phospho-L-histidyl/L-threonyl-[pyruvate, phosphate dikinase] + diphosphate. Bifunctional serine/threonine kinase and phosphorylase involved in the regulation of the pyruvate, phosphate dikinase (PPDK) by catalyzing its phosphorylation/dephosphorylation. The sequence is that of Putative pyruvate, phosphate dikinase regulatory protein from Rickettsia canadensis (strain McKiel).